The sequence spans 397 residues: Phosphoglycerate kinase (397 aa).

Substrate contacts are provided by residues 21–23 (DFN), Arg36, 59–62 (HLGR), Arg119, and Arg156. Residues Lys207, Gly295, Glu326, and 353-356 (GGDS) each bind ATP.

It belongs to the phosphoglycerate kinase family. Monomer.

It is found in the cytoplasm. It catalyses the reaction (2R)-3-phosphoglycerate + ATP = (2R)-3-phospho-glyceroyl phosphate + ADP. Its pathway is carbohydrate degradation; glycolysis; pyruvate from D-glyceraldehyde 3-phosphate: step 2/5. The polypeptide is Phosphoglycerate kinase (Enterococcus faecalis (strain ATCC 700802 / V583)).